The following is a 124-amino-acid chain: MLIRYKKSFEKIAMGLLSFMPNEKDLKQLQQTIKDYETDTDRQLFLWKEDEDIVGAIGVEKKDSEVEIRHISVNPSHRHQGIGKQMMDALKHLFKTQVLVPNELTQSFFERCQGQQDQDISYNN.

The N-acetyltransferase domain maps to 3–124 (IRYKKSFEKI…QQDQDISYNN (122 aa)).

Involved in riboflavin biosynthesis. This is Protein RibT (ribT) from Bacillus subtilis (strain 168).